A 215-amino-acid chain; its full sequence is Jasmonate monooxygenase ABM (215 aa).

In terms of domain architecture, ABM spans 2 to 90 (FAVIFETRPQ…GVLEDYHLRV (89 aa)).

It is found in the endoplasmic reticulum. Its subcellular location is the secreted. It catalyses the reaction jasmonate + NADPH + O2 + H(+) = (1R,2R)-12-hydroxyjasmonate + NADP(+) + H2O. Monooxygenase that converts the endogenous (and likely the host) jasmonate (JA) to its hydroxylated derivative 12-hydroxyjasmonate (12OH-JA), also known as tuberonic acid, a compound that attenuates or disables jasmonate-based host innate immunity and which is essential for proper initiation and elaboration of the blast disease in rice. ABM, together with a polyketide synthase MGG_04775 and the esterase MGG_04774, share the secondary metabolism gene cluster with ABC transporter ABC3, and therefore may also be involved in the synthesis of other important metabolites such as the ABC3 transporter efflux substrate (ATS) and/or additional polyketides. The chain is Jasmonate monooxygenase ABM from Pyricularia oryzae (strain 70-15 / ATCC MYA-4617 / FGSC 8958) (Rice blast fungus).